Consider the following 621-residue polypeptide: Pre-mRNA-processing protein 45 (621 aa).

5 disordered regions span residues 1-73 (MSAT…YANG), 137-164 (SQRT…SNTE), 220-251 (AQRD…RSPP), 347-438 (RARE…ELRM), and 542-621 (GKND…EHDS). The span at 36–51 (PSTSSSSSALVSTSSP) shows a compositional bias: low complexity. Composition is skewed to basic and acidic residues over residues 140 to 164 (TDIK…SNTE) and 220 to 229 (AQRDPLEPPR). Over residues 239-248 (PPSPPPPVLR) the composition is skewed to pro residues. A compositionally biased stretch (basic and acidic residues) spans 364-380 (GRDDDVASRLADSDARP). A compositionally biased stretch (acidic residues) spans 403–417 (DSDESAASDEEDDEG). Basic and acidic residues-rich tracts occupy residues 418–437 (ARER…RELR) and 594–621 (EDAK…EHDS).

Belongs to the SNW family. In terms of assembly, associated with the spliceosome.

Its subcellular location is the nucleus. Involved in pre-mRNA splicing. The chain is Pre-mRNA-processing protein 45 (PRP45) from Mycosarcoma maydis (Corn smut fungus).